We begin with the raw amino-acid sequence, 90 residues long: UPF0297 protein Cthe_0151 (90 aa).

This sequence belongs to the UPF0297 family.

This is UPF0297 protein Cthe_0151 from Acetivibrio thermocellus (strain ATCC 27405 / DSM 1237 / JCM 9322 / NBRC 103400 / NCIMB 10682 / NRRL B-4536 / VPI 7372) (Clostridium thermocellum).